The chain runs to 626 residues: Chaperone protein DnaK (626 aa).

Thr-197 bears the Phosphothreonine; by autocatalysis mark. Basic and acidic residues-rich tracts occupy residues 512–528 (DAEA…EAVE) and 539–551 (QTEK…GEKI). 2 disordered regions span residues 512–551 (DAEA…GEKI) and 601–626 (DQNA…AEVE).

The protein belongs to the heat shock protein 70 family.

In terms of biological role, acts as a chaperone. The sequence is that of Chaperone protein DnaK from Campylobacter fetus subsp. fetus (strain 82-40).